A 297-amino-acid polypeptide reads, in one-letter code: HTH-type transcriptional regulator ArgP (297 aa).

The 57-residue stretch at 4 to 60 (PDYRTLQALDAVIRERGFERAAQKLCITQSAVSQRIKQLENLFGQPLLVRTVPPRPT) folds into the HTH lysR-type domain. Residues 21–40 (FERAAQKLCITQSAVSQRIK) constitute a DNA-binding region (H-T-H motif).

The protein belongs to the LysR transcriptional regulatory family. As to quaternary structure, homodimer.

Controls the transcription of genes involved in arginine and lysine metabolism. The chain is HTH-type transcriptional regulator ArgP from Serratia proteamaculans (strain 568).